The chain runs to 149 residues: Protein FAM72A (149 aa).

This sequence belongs to the FAM72 family. As to quaternary structure, interacts with UNG. May be up-regulated in malignant colon cancers, compared to normal colon and colon adenomas. Expression is also elevated in other common cancer types, including breast, lung, uterus, and ovary.

The protein resides in the cytoplasm. It is found in the mitochondrion. In terms of biological role, may play a role in the regulation of cellular reactive oxygen species metabolism. May participate in cell growth regulation. This Homo sapiens (Human) protein is Protein FAM72A (FAM72A).